Here is a 667-residue protein sequence, read N- to C-terminus: E3 ubiquitin-protein ligase Midline-1 (667 aa).

The RING-type zinc finger occupies 10-60 (CPICLELFEDPLLLPCAHSLCFNCAHRILVSHCATNEPVESINAFQCPTCR). A phosphoserine mark is found at Ser-92 and Ser-96. B box-type zinc fingers lie at residues 116 to 165 (KVLC…IEPI) and 172 to 212 (GLMC…VAAL). The Zn(2+) site is built by Cys-119, Cys-122, Cys-134, Cys-137, Cys-142, Cys-145, His-150, His-159, Cys-175, His-178, Cys-198, and His-204. Positions 205-264 (RDHQVAALSERYDKLKQNLESNLTNLIKRNTELETLLAKLIQTCQHVEVNASRQEAKLTE) form a coiled coil. A COS domain is found at 320 to 379 (LKENDHARFLQTAKNITERVSMATASSQVLIPEINLNDTFDTFALDFSREKKLLECLDYL). Residues 381–484 (APNPPTIREE…EPGKLKTNSQ (104 aa)) form the Fibronectin type-III domain. A compositionally biased stretch (polar residues) spans 471-485 (SRSSEPGKLKTNSQP). The tract at residues 471–524 (SRSSEPGKLKTNSQPFKLDPKSAHRKLKVSHDNLTVERDESSSKKSHTPERFTS) is disordered. Residues 482-659 (NSQPFKLDPK…IITGLPIPDH (178 aa)) enclose the B30.2/SPRY domain. Residues 499-520 (VSHDNLTVERDESSSKKSHTPE) are compositionally biased toward basic and acidic residues. Phosphoserine is present on Ser-511.

It belongs to the TRIM/RBCC family. In terms of assembly, homodimer or heterodimer with MID2. Interacts with IGBP1.

The protein localises to the cytoplasm. It is found in the cytoskeleton. The enzyme catalyses S-ubiquitinyl-[E2 ubiquitin-conjugating enzyme]-L-cysteine + [acceptor protein]-L-lysine = [E2 ubiquitin-conjugating enzyme]-L-cysteine + N(6)-ubiquitinyl-[acceptor protein]-L-lysine.. In terms of biological role, has E3 ubiquitin ligase activity towards IGBP1, promoting its monoubiquitination, which results in deprotection of the catalytic subunit of protein phosphatase PP2A, and its subsequent degradation by polyubiquitination. The chain is E3 ubiquitin-protein ligase Midline-1 (Mid1) from Rattus norvegicus (Rat).